Consider the following 620-residue polypeptide: Pentatricopeptide repeat-containing protein At5g66520 (620 aa).

10 PPR repeats span residues 79 to 113 (DTFL…SAPH), 114 to 148 (NAYT…GYEN), 149 to 179 (DVYA…IPEP), 180 to 210 (DDVS…MAEK), 211 to 245 (NAIS…DVEP), 246 to 280 (DNVS…RIRM), 281 to 311 (DSVL…IKKK), 312 to 346 (SVQA…GIKP), 347 to 382 (NVIT…NLKP), and 383 to 413 (TIEH…MPLK). Residues 418–493 (IWGALLKACR…VPGCSTISLE (76 aa)) are type E motif. The interval 494–524 (GTTHEFLAGDRSHPEIEKIQSKWRIMRRKLE) is type E(+) motif. Residues 525–620 (ENGYVPELEE…DGKCSCGDYW (96 aa)) form a type DYW motif region.

It belongs to the PPR family. PCMP-H subfamily.

The protein is Pentatricopeptide repeat-containing protein At5g66520 (PCMP-H61) of Arabidopsis thaliana (Mouse-ear cress).